A 156-amino-acid chain; its full sequence is SsrA-binding protein (156 aa).

This sequence belongs to the SmpB family.

It is found in the cytoplasm. Its function is as follows. Required for rescue of stalled ribosomes mediated by trans-translation. Binds to transfer-messenger RNA (tmRNA), required for stable association of tmRNA with ribosomes. tmRNA and SmpB together mimic tRNA shape, replacing the anticodon stem-loop with SmpB. tmRNA is encoded by the ssrA gene; the 2 termini fold to resemble tRNA(Ala) and it encodes a 'tag peptide', a short internal open reading frame. During trans-translation Ala-aminoacylated tmRNA acts like a tRNA, entering the A-site of stalled ribosomes, displacing the stalled mRNA. The ribosome then switches to translate the ORF on the tmRNA; the nascent peptide is terminated with the 'tag peptide' encoded by the tmRNA and targeted for degradation. The ribosome is freed to recommence translation, which seems to be the essential function of trans-translation. This is SsrA-binding protein from Desulfitobacterium hafniense (strain DSM 10664 / DCB-2).